A 708-amino-acid polypeptide reads, in one-letter code: Ubiquitin thioesterase ZRANB1 (708 aa).

Residues Glu-3–Ser-33 form a RanBP2-type 1 zinc finger. Zn(2+) is bound by residues Cys-10, Cys-13, Cys-24, and Cys-27. The interval Thr-38–Arg-73 is disordered. RanBP2-type zinc fingers lie at residues Asn-84 to Thr-113 and Arg-149 to Asn-178. Residues Cys-90, Cys-93, Cys-104, Cys-107, Cys-155, Cys-158, Cys-169, and Cys-172 each coordinate Zn(2+). The tract at residues Arg-200–Asp-223 is disordered. Residues Ser-206 to Ser-216 show a composition bias toward polar residues. ANK repeat units follow at residues Lys-260 to Asp-290 and Tyr-313 to Ala-340. One can recognise an OTU domain in the interval Leu-432 to Met-592. Catalysis depends on Cys-443, which acts as the Nucleophile. His-585 acts as the Proton acceptor in catalysis.

It belongs to the peptidase C64 family. Interacts with TRAF6. Interacts with APC.

The protein resides in the cytoplasm. Its subcellular location is the nucleus. It carries out the reaction Thiol-dependent hydrolysis of ester, thioester, amide, peptide and isopeptide bonds formed by the C-terminal Gly of ubiquitin (a 76-residue protein attached to proteins as an intracellular targeting signal).. Its function is as follows. Ubiquitin thioesterase, which specifically hydrolyzes 'Lys-29'-linked and 'Lys-33'-linked diubiquitin. Also cleaves 'Lys-63'-linked chains, but with 40-fold less efficiency compared to 'Lys-29'-linked ones. Positive regulator of the Wnt signaling pathway that deubiquitinates APC protein, a negative regulator of Wnt-mediated transcription. Acts as a regulator of autophagy by mediating deubiquitination of PIK3C3/VPS34, thereby promoting autophagosome maturation. Plays a role in the regulation of cell morphology and cytoskeletal organization. Required in the stress fiber dynamics and cell migration. This Bos taurus (Bovine) protein is Ubiquitin thioesterase ZRANB1.